The primary structure comprises 351 residues: S-adenosylmethionine:tRNA ribosyltransferase-isomerase (351 aa).

It belongs to the QueA family. In terms of assembly, monomer.

It localises to the cytoplasm. It catalyses the reaction 7-aminomethyl-7-carbaguanosine(34) in tRNA + S-adenosyl-L-methionine = epoxyqueuosine(34) in tRNA + adenine + L-methionine + 2 H(+). Its pathway is tRNA modification; tRNA-queuosine biosynthesis. In terms of biological role, transfers and isomerizes the ribose moiety from AdoMet to the 7-aminomethyl group of 7-deazaguanine (preQ1-tRNA) to give epoxyqueuosine (oQ-tRNA). This Hydrogenovibrio crunogenus (strain DSM 25203 / XCL-2) (Thiomicrospira crunogena) protein is S-adenosylmethionine:tRNA ribosyltransferase-isomerase.